The sequence spans 600 residues: Copine-A (600 aa).

2 C2 domains span residues 1 to 111 and 116 to 246; these read MNLK…TVCL and KSGK…NVIN. Residues D23, D29, D82, D84, D89, D151, D158, D215, D217, and D223 each coordinate Ca(2+). Residues 286–503 enclose the VWFA domain; sequence NLIVGIDCTA…ELAAEVLREI (218 aa). The span at 535-549 shows a compositional bias: low complexity; the sequence is YDNPTTTTTATSPST. The segment at 535–583 is disordered; it reads YDNPTTTTTATSPSTGIDLNKGSNVGLNLTKTESSPSPSGGAGIDLNKG. Over residues 555–572 the composition is skewed to polar residues; the sequence is KGSNVGLNLTKTESSPSP.

This sequence belongs to the copine family. Ca(2+) is required as a cofactor.

It localises to the cytoplasm. It is found in the membrane. In terms of biological role, required for cytokinesis, contractile vacuole function and development. The sequence is that of Copine-A (cpnA) from Dictyostelium discoideum (Social amoeba).